The following is a 360-amino-acid chain: Photosystem II protein D1 (360 aa).

Helical transmembrane passes span 30 to 47 (YVGWFGVLMIPCLLTAAA), 119 to 134 (HFLIGISAYMGRQWEL), and 143 to 157 (WICVAYSAPVSAAFA). His-119 is a chlorophyll a binding site. A pheophytin a-binding site is contributed by Tyr-127. [CaMn4O5] cluster-binding residues include Asp-171 and Glu-190. A helical membrane pass occupies residues 198–219 (FHMAGVAGMFGGSLFSAMHGSL). His-199 is a chlorophyll a binding site. A quinone is bound by residues His-216 and 265 to 266 (SF). Residue His-216 participates in Fe cation binding. His-273 contributes to the Fe cation binding site. A helical transmembrane segment spans residues 275–289 (FLAVFPVVCVWLTSM). Residues His-333, Glu-334, Asp-343, and Ala-345 each contribute to the [CaMn4O5] cluster site. The propeptide occupies 346–360 (AAESTTVALSAPAIG).

It belongs to the reaction center PufL/M/PsbA/D family. PSII is composed of 1 copy each of membrane proteins PsbA, PsbB, PsbC, PsbD, PsbE, PsbF, PsbH, PsbI, PsbJ, PsbK, PsbL, PsbM, PsbT, PsbX, PsbY, Psb30/Ycf12, peripheral proteins PsbO, CyanoQ (PsbQ), PsbU, PsbV and a large number of cofactors. It forms dimeric complexes. It depends on The D1/D2 heterodimer binds P680, chlorophylls that are the primary electron donor of PSII, and subsequent electron acceptors. It shares a non-heme iron and each subunit binds pheophytin, quinone, additional chlorophylls, carotenoids and lipids. D1 provides most of the ligands for the Mn4-Ca-O5 cluster of the oxygen-evolving complex (OEC). There is also a Cl(-1) ion associated with D1 and D2, which is required for oxygen evolution. The PSII complex binds additional chlorophylls, carotenoids and specific lipids. as a cofactor. In terms of processing, tyr-162 forms a radical intermediate that is referred to as redox-active TyrZ, YZ or Y-Z. Post-translationally, C-terminally processed by CtpA; processing is essential to allow assembly of the oxygen-evolving complex and thus photosynthetic growth.

The protein resides in the cellular thylakoid membrane. It carries out the reaction 2 a plastoquinone + 4 hnu + 2 H2O = 2 a plastoquinol + O2. Functionally, photosystem II (PSII) is a light-driven water:plastoquinone oxidoreductase that uses light energy to abstract electrons from H(2)O, generating O(2) and a proton gradient subsequently used for ATP formation. It consists of a core antenna complex that captures photons, and an electron transfer chain that converts photonic excitation into a charge separation. The D1/D2 (PsbA/PsbD) reaction center heterodimer binds P680, the primary electron donor of PSII as well as several subsequent electron acceptors. The polypeptide is Photosystem II protein D1 (Prochlorococcus marinus (strain MIT 9301)).